The sequence spans 206 residues: LexA repressor (206 aa).

The H-T-H motif DNA-binding region spans 28 to 48; sequence RAEIATRLGFKSANAAEEHLK. Residues S123 and K160 each act as for autocatalytic cleavage activity in the active site.

It belongs to the peptidase S24 family. In terms of assembly, homodimer.

It carries out the reaction Hydrolysis of Ala-|-Gly bond in repressor LexA.. Functionally, represses a number of genes involved in the response to DNA damage (SOS response), including recA and lexA. In the presence of single-stranded DNA, RecA interacts with LexA causing an autocatalytic cleavage which disrupts the DNA-binding part of LexA, leading to derepression of the SOS regulon and eventually DNA repair. In Shewanella sp. (strain MR-4), this protein is LexA repressor.